Reading from the N-terminus, the 160-residue chain is SsrA-binding protein (160 aa).

This sequence belongs to the SmpB family.

The protein localises to the cytoplasm. Functionally, required for rescue of stalled ribosomes mediated by trans-translation. Binds to transfer-messenger RNA (tmRNA), required for stable association of tmRNA with ribosomes. tmRNA and SmpB together mimic tRNA shape, replacing the anticodon stem-loop with SmpB. tmRNA is encoded by the ssrA gene; the 2 termini fold to resemble tRNA(Ala) and it encodes a 'tag peptide', a short internal open reading frame. During trans-translation Ala-aminoacylated tmRNA acts like a tRNA, entering the A-site of stalled ribosomes, displacing the stalled mRNA. The ribosome then switches to translate the ORF on the tmRNA; the nascent peptide is terminated with the 'tag peptide' encoded by the tmRNA and targeted for degradation. The ribosome is freed to recommence translation, which seems to be the essential function of trans-translation. The protein is SsrA-binding protein of Rhodospirillum rubrum (strain ATCC 11170 / ATH 1.1.1 / DSM 467 / LMG 4362 / NCIMB 8255 / S1).